Consider the following 413-residue polypeptide: Methylaspartate ammonia-lyase (413 aa).

Residue Q172 coordinates (2S,3S)-3-methyl-L-aspartate. Residues D238, E273, and D307 each contribute to the Mg(2+) site. (2S,3S)-3-methyl-L-aspartate is bound at residue Q329. K331 serves as the catalytic Proton acceptor. Residues 360-361 (TC) and C361 each bind (2S,3S)-3-methyl-L-aspartate.

Belongs to the methylaspartate ammonia-lyase family. As to quaternary structure, homodimer. Requires Mg(2+) as cofactor.

It catalyses the reaction (2S,3S)-3-methyl-L-aspartate = mesaconate + NH4(+). Its pathway is amino-acid degradation; L-glutamate degradation via mesaconate pathway; acetate and pyruvate from L-glutamate: step 2/4. Its activity is regulated as follows. Inhibited by calcium ions. Its function is as follows. Involved in the methylaspartate cycle. Catalyzes the formation of the alpha,beta-unsaturated bond by the reversible anti elimination of ammonia from L-threo-beta-methylaspartate (L-threo-(2S,3S)-3-methylaspartate) to give mesaconate. It can also use L-erythro-beta-methylaspartate (L-erythro-(2S,3R)-3-methylaspartate), L-aspartate, fumarate and ethylfumarate as substrates. This Clostridium tetanomorphum protein is Methylaspartate ammonia-lyase.